The chain runs to 813 residues: DNA gyrase subunit A (813 aa).

The 467-residue stretch at 38 to 504 folds into the Topo IIA-type catalytic domain; it reads LPDVRDGLKP…EIEYLDVEDF (467 aa). Catalysis depends on tyrosine 126, which acts as the O-(5'-phospho-DNA)-tyrosine intermediate. The GyrA-box motif lies at 531-537; sequence QNRGGKG.

This sequence belongs to the type II topoisomerase GyrA/ParC subunit family. Heterotetramer, composed of two GyrA and two GyrB chains. In the heterotetramer, GyrA contains the active site tyrosine that forms a transient covalent intermediate with DNA, while GyrB binds cofactors and catalyzes ATP hydrolysis.

It localises to the cytoplasm. The enzyme catalyses ATP-dependent breakage, passage and rejoining of double-stranded DNA.. Functionally, a type II topoisomerase that negatively supercoils closed circular double-stranded (ds) DNA in an ATP-dependent manner to modulate DNA topology and maintain chromosomes in an underwound state. Negative supercoiling favors strand separation, and DNA replication, transcription, recombination and repair, all of which involve strand separation. Also able to catalyze the interconversion of other topological isomers of dsDNA rings, including catenanes and knotted rings. Type II topoisomerases break and join 2 DNA strands simultaneously in an ATP-dependent manner. This is DNA gyrase subunit A from Treponema pallidum (strain Nichols).